Consider the following 280-residue polypeptide: Transcription factor MYB46 (280 aa).

2 HTH myb-type domains span residues 15–67 (VKKM…INYL) and 68–122 (RPDL…KKRL). DNA-binding regions (H-T-H motif) lie at residues 43 to 67 (WSDV…INYL) and 95 to 118 (WSQI…NSTI). A disordered region spans residues 129–150 (SNLINNSSSSPNTASDSSSNSA).

In terms of tissue distribution, expressed at low levels in stems and siliques, specifically in xylem.

It localises to the nucleus. Its function is as follows. Transcription activator. Involved in the regulation of secondary wall biosynthesis in fibers and vessels. Transcription activator of the mannan synthase CSLA9 that recognizes and binds to the DNA consensus sequence 5'-[AG][GT]T[AT]GGT[GA]-3' cis-regulatory element of CSLA9 promoter. Transcription factor that acts as a molecular switch in the NAC012/SND1-mediated transcriptional network regulating secondary wall biosynthesis. Is directly activated by NAC012/SND1. Functions redundantly with MYB83 in the transcriptional regulatory cascade leading to secondary wall formation in fibers and vessels. Transcription activator that binds to the DNA consensus sequence 5'-ACC[AT]A[AC][TC]-3', designated as the secondary wall MYB-responsive element (SMRE). Regulates directly numerous transcription factors and a number of genes involved in secondary wall biosynthesis that contain SMRE elements in their promoters. Is an obligate component of the transcriptional regulatory complex toward the commitment of secondary wall cellulose synthesis. Is required for functional expression of the three secondary wall CESA genes, CESA4, CESA7 and CESA8. This is Transcription factor MYB46 from Arabidopsis thaliana (Mouse-ear cress).